A 332-amino-acid polypeptide reads, in one-letter code: Glycerol-3-phosphate dehydrogenase [NAD(P)+] (332 aa).

NADPH-binding residues include serine 15, tryptophan 16, and lysine 110. Sn-glycerol 3-phosphate contacts are provided by lysine 110, glycine 137, and serine 139. Alanine 141 contributes to the NADPH binding site. Residues lysine 192, aspartate 245, serine 255, arginine 256, and asparagine 257 each contribute to the sn-glycerol 3-phosphate site. Lysine 192 (proton acceptor) is an active-site residue. Residue arginine 256 participates in NADPH binding. Glutamate 282 contributes to the NADPH binding site.

The protein belongs to the NAD-dependent glycerol-3-phosphate dehydrogenase family.

The protein resides in the cytoplasm. The enzyme catalyses sn-glycerol 3-phosphate + NAD(+) = dihydroxyacetone phosphate + NADH + H(+). The catalysed reaction is sn-glycerol 3-phosphate + NADP(+) = dihydroxyacetone phosphate + NADPH + H(+). It functions in the pathway membrane lipid metabolism; glycerophospholipid metabolism. Catalyzes the reduction of the glycolytic intermediate dihydroxyacetone phosphate (DHAP) to sn-glycerol 3-phosphate (G3P), the key precursor for phospholipid synthesis. This Coxiella burnetii (strain RSA 331 / Henzerling II) protein is Glycerol-3-phosphate dehydrogenase [NAD(P)+].